We begin with the raw amino-acid sequence, 369 residues long: Holliday junction branch migration complex subunit RuvB (369 aa).

A disordered region spans residues 1-21; it reads MHKNENNRLLGSVSLPDDPDR. Residues 1 to 184 are large ATPase domain (RuvB-L); sequence MHKNENNRLL…FGIPIRLNFY (184 aa). ATP is bound by residues L23, R24, G65, K68, T69, T70, 131 to 133, R174, Y184, and R221; that span reads EDY. T69 contacts Mg(2+). Residues 185–255 form a small ATPAse domain (RuvB-S) region; sequence TIEELEYIVK…IADTALSRLE (71 aa). Residues 258 to 369 form a head domain (RuvB-H) region; it reads HLGLDPLDRN…QKHLWEKDYD (112 aa). The DNA site is built by R294, R313, and R318.

The protein belongs to the RuvB family. Homohexamer. Forms an RuvA(8)-RuvB(12)-Holliday junction (HJ) complex. HJ DNA is sandwiched between 2 RuvA tetramers; dsDNA enters through RuvA and exits via RuvB. An RuvB hexamer assembles on each DNA strand where it exits the tetramer. Each RuvB hexamer is contacted by two RuvA subunits (via domain III) on 2 adjacent RuvB subunits; this complex drives branch migration. In the full resolvosome a probable DNA-RuvA(4)-RuvB(12)-RuvC(2) complex forms which resolves the HJ.

Its subcellular location is the cytoplasm. It catalyses the reaction ATP + H2O = ADP + phosphate + H(+). Functionally, the RuvA-RuvB-RuvC complex processes Holliday junction (HJ) DNA during genetic recombination and DNA repair, while the RuvA-RuvB complex plays an important role in the rescue of blocked DNA replication forks via replication fork reversal (RFR). RuvA specifically binds to HJ cruciform DNA, conferring on it an open structure. The RuvB hexamer acts as an ATP-dependent pump, pulling dsDNA into and through the RuvAB complex. RuvB forms 2 homohexamers on either side of HJ DNA bound by 1 or 2 RuvA tetramers; 4 subunits per hexamer contact DNA at a time. Coordinated motions by a converter formed by DNA-disengaged RuvB subunits stimulates ATP hydrolysis and nucleotide exchange. Immobilization of the converter enables RuvB to convert the ATP-contained energy into a lever motion, pulling 2 nucleotides of DNA out of the RuvA tetramer per ATP hydrolyzed, thus driving DNA branch migration. The RuvB motors rotate together with the DNA substrate, which together with the progressing nucleotide cycle form the mechanistic basis for DNA recombination by continuous HJ branch migration. Branch migration allows RuvC to scan DNA until it finds its consensus sequence, where it cleaves and resolves cruciform DNA. In Bartonella bacilliformis (strain ATCC 35685 / KC583 / Herrer 020/F12,63), this protein is Holliday junction branch migration complex subunit RuvB.